A 102-amino-acid chain; its full sequence is uncharacterized protein (102 aa).

Positions methionine 1–glutamine 102 are disordered.

This is an uncharacterized protein from Caenorhabditis elegans.